The following is a 247-amino-acid chain: DNA polymerase sliding clamp (247 aa).

Belongs to the PCNA family. In terms of assembly, homotrimer. The subunits circularize to form a toroid; DNA passes through its center. Replication factor C (RFC) is required to load the toroid on the DNA.

In terms of biological role, sliding clamp subunit that acts as a moving platform for DNA processing. Responsible for tethering the catalytic subunit of DNA polymerase and other proteins to DNA during high-speed replication. The chain is DNA polymerase sliding clamp from Haloarcula marismortui (strain ATCC 43049 / DSM 3752 / JCM 8966 / VKM B-1809) (Halobacterium marismortui).